The sequence spans 898 residues: Alanine--tRNA ligase (898 aa).

Zn(2+)-binding residues include His589, His593, Cys693, and His697.

It belongs to the class-II aminoacyl-tRNA synthetase family. Requires Zn(2+) as cofactor.

It localises to the cytoplasm. The enzyme catalyses tRNA(Ala) + L-alanine + ATP = L-alanyl-tRNA(Ala) + AMP + diphosphate. Functionally, catalyzes the attachment of alanine to tRNA(Ala) in a two-step reaction: alanine is first activated by ATP to form Ala-AMP and then transferred to the acceptor end of tRNA(Ala). Also edits incorrectly charged Ser-tRNA(Ala) and Gly-tRNA(Ala) via its editing domain. In Methanothermobacter thermautotrophicus (strain ATCC 29096 / DSM 1053 / JCM 10044 / NBRC 100330 / Delta H) (Methanobacterium thermoautotrophicum), this protein is Alanine--tRNA ligase.